A 205-amino-acid chain; its full sequence is Peroxynitrite isomerase (205 aa).

The interval 1–23 (MTEPDPAAAEQRPSVGRNLPTFQ) is disordered. The short motif at 52-58 (GVWRGEG) is the GXWXGXG element. T63, K168, and H195 together coordinate heme b.

This sequence belongs to the nitrobindin family. As to quaternary structure, homodimer. Requires heme b as cofactor.

The catalysed reaction is peroxynitrite = nitrate. Its pathway is nitrogen metabolism. In terms of biological role, heme-binding protein able to scavenge peroxynitrite and to protect free L-tyrosine against peroxynitrite-mediated nitration, by acting as a peroxynitrite isomerase that converts peroxynitrite to nitrate. Therefore, this protein likely plays a role in peroxynitrite sensing and in the detoxification of reactive nitrogen and oxygen species (RNS and ROS, respectively). Is able to bind nitric oxide (NO) in vitro, but may act as a sensor of peroxynitrite levels in vivo. The polypeptide is Peroxynitrite isomerase (Mycobacteroides abscessus (strain ATCC 19977 / DSM 44196 / CCUG 20993 / CIP 104536 / JCM 13569 / NCTC 13031 / TMC 1543 / L948) (Mycobacterium abscessus)).